Reading from the N-terminus, the 411-residue chain is Glucose-1-phosphate adenylyltransferase (411 aa).

Alpha-D-glucose 1-phosphate is bound by residues Gly-164, 179-180 (EK), and Ser-197.

This sequence belongs to the bacterial/plant glucose-1-phosphate adenylyltransferase family. Homotetramer.

The catalysed reaction is alpha-D-glucose 1-phosphate + ATP + H(+) = ADP-alpha-D-glucose + diphosphate. It participates in glycan biosynthesis; glycogen biosynthesis. In terms of biological role, involved in the biosynthesis of ADP-glucose, a building block required for the elongation reactions to produce glycogen. Catalyzes the reaction between ATP and alpha-D-glucose 1-phosphate (G1P) to produce pyrophosphate and ADP-Glc. In Corynebacterium kroppenstedtii (strain DSM 44385 / JCM 11950 / CIP 105744 / CCUG 35717), this protein is Glucose-1-phosphate adenylyltransferase.